The following is a 172-amino-acid chain: Molybdopterin synthase catalytic subunit (172 aa).

A Phosphoserine modification is found at serine 20. Residues 127-128 (HR), lysine 143, and 150-152 (KKE) each bind substrate.

The protein belongs to the MoaE family. MOCS2B subfamily. In terms of assembly, heterotetramer; composed of 2 small (MOCS2A) and 2 large (MOCS2B) subunits.

The protein resides in the cytoplasm. It is found in the cytosol. It catalyses the reaction 2 [molybdopterin-synthase sulfur-carrier protein]-C-terminal-Gly-aminoethanethioate + cyclic pyranopterin phosphate + H2O = molybdopterin + 2 [molybdopterin-synthase sulfur-carrier protein]-C-terminal Gly-Gly + 2 H(+). The protein operates within cofactor biosynthesis; molybdopterin biosynthesis. In terms of biological role, catalytic subunit of the molybdopterin synthase complex, a complex that catalyzes the conversion of precursor Z into molybdopterin. Acts by mediating the incorporation of 2 sulfur atoms from thiocarboxylated MOCS2A into precursor Z to generate a dithiolene group. This chain is Molybdopterin synthase catalytic subunit, found in Pongo abelii (Sumatran orangutan).